We begin with the raw amino-acid sequence, 453 residues long: UPF0210 protein MM_0081 (453 aa).

It belongs to the UPF0210 family.

This chain is UPF0210 protein MM_0081, found in Methanosarcina mazei (strain ATCC BAA-159 / DSM 3647 / Goe1 / Go1 / JCM 11833 / OCM 88) (Methanosarcina frisia).